The primary structure comprises 153 residues: Succinate dehydrogenase assembly factor 2, mitochondrial (153 aa).

This sequence belongs to the SDHAF2 family. In terms of assembly, interacts with the flavoprotein subunit within the SDH catalytic dimer.

The protein localises to the mitochondrion matrix. Its function is as follows. Plays an essential role in the assembly of succinate dehydrogenase (SDH), an enzyme complex (also referred to as respiratory complex II) that is a component of both the tricarboxylic acid (TCA) cycle and the mitochondrial electron transport chain, and which couples the oxidation of succinate to fumarate with the reduction of ubiquinone (coenzyme Q) to ubiquinol. Required for flavinylation (covalent attachment of FAD) of the flavoprotein subunit of the SDH catalytic dimer. The polypeptide is Succinate dehydrogenase assembly factor 2, mitochondrial (Candida glabrata (strain ATCC 2001 / BCRC 20586 / JCM 3761 / NBRC 0622 / NRRL Y-65 / CBS 138) (Yeast)).